Here is a 146-residue protein sequence, read N- to C-terminus: Decoration protein (146 aa).

Homotrimer. Interacts with the major capsid protein.

It is found in the virion. In terms of biological role, cooperatively binds the expanded capsid, thereby stabilizing the mature capsid shell and allowing the large viral DNA to be packaged. Trimers of capsid decoration proteins molecules are located at local and icosahedral threefold axes and stabilize the expanded capsid, which shows increased spacing between capsomers. This Thermus thermophilus (Thermus thermophilus phage P23-45) protein is Decoration protein.